The primary structure comprises 249 residues: Neurotrophic factor BDNF precursor form (249 aa).

The N-terminal stretch at 1–18 is a signal peptide; that stretch reads MTILFLTMVISYFGCMKA. The propeptide occupies 19–130; the sequence is APMKEANVHG…AANMSMRVRR (112 aa). An N-linked (GlcNAc...) asparagine glycan is attached at Asn-123. 3 disulfide bridges follow: Cys-143/Cys-210, Cys-188/Cys-239, and Cys-198/Cys-241.

This sequence belongs to the NGF-beta family. In terms of assembly, monomers and homodimers. Binds to NTRK2/TRKB. Can form heterodimers with other neurotrophin family members, such as NTF3 and NTF4 (in vitro), but the physiological relevance of this is not clear. BDNF precursor form: interacts with the heterodimer formed by NGFR and SORCS2. Mature BDNF has much lower affinity for the heterodimer formed by NGFR and SORCS2. Post-translationally, N-glycosylated and glycosulfated, contrary to mature BDNF. Mature BDNF is produced by proteolytic removal of the propeptide, catalyzed by a FURIN family member. In addition, the precursor form is proteolytically cleaved within the propeptide, but this is not an obligatory intermediate for the production of mature BDNF. Can be converted into mature BDNF by plasmin (PLG).

The protein resides in the secreted. In terms of biological role, important signaling molecule that activates signaling cascades downstream of NTRK2. During development, promotes the survival and differentiation of selected neuronal populations of the peripheral and central nervous systems. Participates in axonal growth, pathfinding and in the modulation of dendritic growth and morphology. Major regulator of synaptic transmission and plasticity at adult synapses in many regions of the CNS. The versatility of BDNF is emphasized by its contribution to a range of adaptive neuronal responses including long-term potentiation (LTP), long-term depression (LTD), certain forms of short-term synaptic plasticity, as well as homeostatic regulation of intrinsic neuronal excitability. Important signaling molecule that activates signaling cascades downstream of NTRK2. Activates signaling cascades via the heterodimeric receptor formed by NGFR and SORCS2. Signaling via NGFR and SORCS2 plays a role in synaptic plasticity and long-term depression (LTD). Binding to NGFR and SORCS2 promotes neuronal apoptosis. Promotes neuronal growth cone collapse. This Rattus norvegicus (Rat) protein is Neurotrophic factor BDNF precursor form (Bdnf).